A 354-amino-acid chain; its full sequence is Rhodopsin (354 aa).

Topologically, residues 1–36 (MNGTEGPYFYIPMLNTTGVVRSPYEYPQYYLVNPAA) are extracellular. 2 N-linked (GlcNAc...) asparagine glycosylation sites follow: Asn-2 and Asn-15. Residues 37–61 (YAVLGAYMFFLILVGFPINFLTLYV) form a helical membrane-spanning segment. At 62 to 73 (TIEHKKLRTPLN) the chain is on the cytoplasmic side. Residues 74-96 (YILLNLAVADLFMVFGGFTTTIY) traverse the membrane as a helical segment. The Extracellular portion of the chain corresponds to 97-110 (TSMHGYFVLGRLGC). Cysteines 110 and 187 form a disulfide. Residues 111 to 133 (NVEGFSATLGGEIALWSLVVLAI) form a helical membrane-spanning segment. A 'Ionic lock' involved in activated form stabilization motif is present at residues 134–136 (ERW). The Cytoplasmic portion of the chain corresponds to 134-152 (ERWVVVCKPISNFRFGENH). Residues 153–173 (AIMGVAFTWFMAAACAVPPLF) traverse the membrane as a helical segment. The Extracellular segment spans residues 174–202 (GWSRYIPEGMQCSCGIDYYTRAEGFNNES). Residue Asn-200 is glycosylated (N-linked (GlcNAc...) asparagine). The chain crosses the membrane as a helical span at residues 203-224 (FVIYMFTCHFCIPLMVVFFCYG). Residues 225–252 (RLVCAVKEAAAAQQESETTQRAEREVTR) are Cytoplasmic-facing. A helical transmembrane segment spans residues 253 to 274 (MVIIMVVSFLVSWVPYASVAWY). Residues 275–286 (IFTHQGSEFGPL) are Extracellular-facing. A helical membrane pass occupies residues 287-308 (FMTIPAFFAKSSSIYNPMIYIC). Position 296 is an N6-(retinylidene)lysine (Lys-296). The Cytoplasmic segment spans residues 309 to 354 (MNKQFRHCMITTLCCGKNPFEEEEGASSTASKTEASSVSSSSVSPA). 2 S-palmitoyl cysteine lipidation sites follow: Cys-322 and Cys-323. Residues 329–354 (EEEEGASSTASKTEASSVSSSSVSPA) form a disordered region. The segment covering 334 to 354 (ASSTASKTEASSVSSSSVSPA) has biased composition (low complexity).

This sequence belongs to the G-protein coupled receptor 1 family. Opsin subfamily. In terms of processing, phosphorylated on some or all of the serine and threonine residues present in the C-terminal region. Post-translationally, contains one covalently linked retinal chromophore.

The protein localises to the membrane. It localises to the cell projection. Its subcellular location is the cilium. It is found in the photoreceptor outer segment. In terms of biological role, photoreceptor required for image-forming vision at low light intensity. While most salt water fish species use retinal as chromophore, most freshwater fish use 3-dehydroretinal, or a mixture of retinal and 3-dehydroretinal. Light-induced isomerization of 11-cis to all-trans retinal triggers a conformational change that activates signaling via G-proteins. Subsequent receptor phosphorylation mediates displacement of the bound G-protein alpha subunit by arrestin and terminates signaling. The protein is Rhodopsin (rho) of Atherina boyeri (Big-scale sand smelt).